Consider the following 606-residue polypeptide: Threonine--tRNA ligase (606 aa).

Positions 212–503 are catalytic; the sequence is DHRKLGVEMK…LIEHTAGELP (292 aa). The Zn(2+) site is built by cysteine 304, histidine 355, and histidine 480.

Belongs to the class-II aminoacyl-tRNA synthetase family. In terms of assembly, homodimer. It depends on Zn(2+) as a cofactor.

It is found in the cytoplasm. It carries out the reaction tRNA(Thr) + L-threonine + ATP = L-threonyl-tRNA(Thr) + AMP + diphosphate + H(+). Catalyzes the attachment of threonine to tRNA(Thr) in a two-step reaction: L-threonine is first activated by ATP to form Thr-AMP and then transferred to the acceptor end of tRNA(Thr). Also edits incorrectly charged L-seryl-tRNA(Thr). In Campylobacter curvus (strain 525.92), this protein is Threonine--tRNA ligase.